Consider the following 232-residue polypeptide: 2,3,4,5-tetrahydropyridine-2,6-dicarboxylate N-acetyltransferase (232 aa).

This sequence belongs to the transferase hexapeptide repeat family. DapH subfamily.

It carries out the reaction (S)-2,3,4,5-tetrahydrodipicolinate + acetyl-CoA + H2O = L-2-acetamido-6-oxoheptanedioate + CoA. It functions in the pathway amino-acid biosynthesis; L-lysine biosynthesis via DAP pathway; LL-2,6-diaminopimelate from (S)-tetrahydrodipicolinate (acetylase route): step 1/3. Its function is as follows. Catalyzes the transfer of an acetyl group from acetyl-CoA to tetrahydrodipicolinate. In Streptococcus pneumoniae (strain Taiwan19F-14), this protein is 2,3,4,5-tetrahydropyridine-2,6-dicarboxylate N-acetyltransferase.